The chain runs to 223 residues: UPF0441 protein YgiB (223 aa).

The segment at 201–223 is disordered; that stretch reads ESVAKQSTMQRSAAGTSTRSMGG. The segment covering 204–223 has biased composition (polar residues); sequence AKQSTMQRSAAGTSTRSMGG.

This sequence belongs to the UPF0441 family.

This is UPF0441 protein YgiB from Salmonella gallinarum (strain 287/91 / NCTC 13346).